The sequence spans 179 residues: Inner membrane-spanning protein YciB (179 aa).

A run of 5 helical transmembrane segments spans residues 22–42 (IYAATTALIVATAVVLIYSWV), 50–70 (MALITFVLVAVFGGLTIFFHN), 76–96 (WKVTVIYALFAGALLFSQWVM), 121–141 (LAWAVFFILCGLANIYIAFWL), and 149–169 (FKVFGLTALTLVFTLLSGIYI).

It belongs to the YciB family.

It is found in the cell inner membrane. Functionally, plays a role in cell envelope biogenesis, maintenance of cell envelope integrity and membrane homeostasis. The chain is Inner membrane-spanning protein YciB from Klebsiella pneumoniae subsp. pneumoniae (strain ATCC 700721 / MGH 78578).